The primary structure comprises 499 residues: Aspartyl/glutamyl-tRNA(Asn/Gln) amidotransferase subunit B (499 aa).

This sequence belongs to the GatB/GatE family. GatB subfamily. As to quaternary structure, heterotrimer of A, B and C subunits.

It carries out the reaction L-glutamyl-tRNA(Gln) + L-glutamine + ATP + H2O = L-glutaminyl-tRNA(Gln) + L-glutamate + ADP + phosphate + H(+). The enzyme catalyses L-aspartyl-tRNA(Asn) + L-glutamine + ATP + H2O = L-asparaginyl-tRNA(Asn) + L-glutamate + ADP + phosphate + 2 H(+). In terms of biological role, allows the formation of correctly charged Asn-tRNA(Asn) or Gln-tRNA(Gln) through the transamidation of misacylated Asp-tRNA(Asn) or Glu-tRNA(Gln) in organisms which lack either or both of asparaginyl-tRNA or glutaminyl-tRNA synthetases. The reaction takes place in the presence of glutamine and ATP through an activated phospho-Asp-tRNA(Asn) or phospho-Glu-tRNA(Gln). The chain is Aspartyl/glutamyl-tRNA(Asn/Gln) amidotransferase subunit B from Bartonella bacilliformis (strain ATCC 35685 / KC583 / Herrer 020/F12,63).